Here is a 349-residue protein sequence, read N- to C-terminus: 4-hydroxy-2-oxovalerate aldolase 2 (349 aa).

The Pyruvate carboxyltransferase domain maps to V12–A264. Residue R20–D21 coordinates substrate. A Mn(2+)-binding site is contributed by D21. The active-site Proton acceptor is the H24. Positions 174 and 203 each coordinate substrate. 2 residues coordinate Mn(2+): H203 and H205. Y294 serves as a coordination point for substrate.

The protein belongs to the 4-hydroxy-2-oxovalerate aldolase family.

It carries out the reaction (S)-4-hydroxy-2-oxopentanoate = acetaldehyde + pyruvate. The sequence is that of 4-hydroxy-2-oxovalerate aldolase 2 (bphI-2) from Mycolicibacterium smegmatis (strain ATCC 700084 / mc(2)155) (Mycobacterium smegmatis).